Here is a 200-residue protein sequence, read N- to C-terminus: Dephospho-CoA kinase (200 aa).

The DPCK domain occupies Val4 to Asp200. ATP is bound at residue Ala12–Thr17.

This sequence belongs to the CoaE family.

The protein resides in the cytoplasm. The catalysed reaction is 3'-dephospho-CoA + ATP = ADP + CoA + H(+). It participates in cofactor biosynthesis; coenzyme A biosynthesis; CoA from (R)-pantothenate: step 5/5. Functionally, catalyzes the phosphorylation of the 3'-hydroxyl group of dephosphocoenzyme A to form coenzyme A. This Bacillus cereus (strain ATCC 14579 / DSM 31 / CCUG 7414 / JCM 2152 / NBRC 15305 / NCIMB 9373 / NCTC 2599 / NRRL B-3711) protein is Dephospho-CoA kinase.